Reading from the N-terminus, the 618-residue chain is Two-component response regulator-like APRR1 (618 aa).

The region spanning 20-138 is the Response regulatory domain; sequence RILLCDNDST…ELLNLWTHMW (119 aa). Polar residues-rich tracts occupy residues 161 to 174, 187 to 200, 246 to 257, 324 to 334, and 375 to 389; these read SDQS…TNLF, NPQR…ENEW, RNSNPAQFSSAP, PKSTVLRTNGQ, and TEQY…QNGA. 5 disordered regions span residues 161 to 200, 239 to 260, 316 to 338, 368 to 395, and 573 to 618; these read SDQS…ENEW, SHHE…PKKS, TKQA…DPPL, QAHR…PHSL, and VRKM…ALGT. A CCT domain is found at 533–575; sequence REEALLKFRRKRNQRCFDKKIRYVNRKRLAERRPRVKGQFVRK. Residues 588–610 adopt a coiled-coil conformation; the sequence is DSADYDDEEEEEEEEEEENRDSS. A compositionally biased stretch (acidic residues) spans 590-606; it reads ADYDDEEEEEEEEEEEN.

It belongs to the ARR-like family. Interacts with PIF1, PIL2, PIF3, PIF4, PIL5, PIL6, ABI3 (via C-terminus), ADO1/ZTL, ADO2, APRR3 and TCP21/CHE. Both the phosphorylated and the dephosphorylated forms interact with ADO1/ZLT. Post-translationally, phosphorylated; during the day. Phosphorylation is required for optimal interaction with APRR3. In terms of tissue distribution, expressed in leaves, flowers and siliques. Restricted to the vasculature.

It is found in the nucleus. Controls photoperiodic flowering response. Component of the circadian clock. Expression of several members of the ARR-like family is controlled by circadian rhythm. The particular coordinated sequential expression of APRR9, APRR7, APRR5, APRR3 and APPR1 result to circadian waves that may be at the basis of the endogenous circadian clock. Positive regulator of CCA1 and LHY expression. In Arabidopsis thaliana (Mouse-ear cress), this protein is Two-component response regulator-like APRR1 (APRR1).